A 965-amino-acid polypeptide reads, in one-letter code: MTMVYSDNTSIITSAGGLMALLDEQERELQVHALLKIYEFIDQLWPEISDDVTKIEVMYEDHSFPERELAALVVSKVYYYLGEYDEALLFALSSGPKFLHDKNSDYKETLIFKCIDMFIHKSAELYKNPKADPLDERLSGVVEGIFQKCYAKNEWRHVLGIAIEAHRLDIIEYILNADKETDLKPYVLELAMTVVLDIEFRNRLLRLLLSSFLTETEPDYFSVGKCVVHLNDASVAAKLLMKLSSQNDDKSLLTAYQLAFDLEDSAPQEFLNSVMDLLPSPSVANSEEDANADSKKEDSSPCGYIIRILSGEQTVKYDREFLYAHNNTDMLILNRTKDSLEARNSVFHNAVTFANAFMNFGTSSDSFFRDNLSWLSKANNWSKFTATAALGVIHRGYYNQAMNILRPYLPEEDAPSSSTYSEGGAFYAMGLIHANHGRGVTEYLREQLKHTEDEIVQYGLLLGIGLTGMASRDETLYESVKTILFNDNAVAGSAAGISMGLIMLGTASSAAIDEMLQYAHETQHEKIIRGLGIGIALIVYGRQQEADGIIKELNNDLDPTLRYAGMFATALAYCGTSNSKIVRDVLHISVSDVNDDVRRAAVCALGFICFKDPNALISTVELLVDSYNPHVRYGSAIALGIACANSGSNAALDLLSRLVEDATDFVRQGAMIAQAMILTQHNDQLNSKVSGIRKHFEQVINEKHEDALAKLGATLAQGIIDAGGRNVTIALQTATGSLKLSAIVGLTVFLQYWYWFPLTHFMSLSFSPTALIGLDKNLNAPKFSFISNVRPKLFAYPPKSVQPTAKTVQKVETAVLSTTVKAQARAKRAEREKASKGSNDDEMKIDKKTTEEKEATPMEMDEEKSQDISINGNSKKEEPKSETLENFTRVVPAQLPYISFNLNGRYYPVRKFTGGVLMLIDRESDKAPDLIELNRDAVPASADTEPGEQEASPPEDFEYPFDDDD.

PC repeat units follow at residues 385–418, 424–457, 459–493, 494–528, 530–563, 564–599, 600–632, 634–668, 669–699, and 712–744; these read TATA…PSSS, GAFY…EIVQ, GLLL…VAGS, AAGI…EKII, GLGI…TLRY, AGMF…DVRR, AAVC…PHVR, GSAI…FVRQ, GAMI…FEQV, and GATL…SAIV. Disordered stretches follow at residues 826-883 and 934-965; these read AKRA…KSET and NRDA…DDDD. 2 stretches are compositionally biased toward basic and acidic residues: residues 827-856 and 874-883; these read KRAE…KEAT and SKKEEPKSET. The span at 945 to 965 shows a compositional bias: acidic residues; sequence EPGEQEASPPEDFEYPFDDDD. Serine 952 is subject to Phosphoserine.

This sequence belongs to the proteasome subunit S1 family.

Functionally, acts as a regulatory subunit of the 26S proteasome which is involved in the ATP-dependent degradation of ubiquitinated proteins. The polypeptide is 26S proteasome regulatory subunit rpn2 (rpn2) (Schizosaccharomyces pombe (strain 972 / ATCC 24843) (Fission yeast)).